A 182-amino-acid chain; its full sequence is ATP synthase subunit b (182 aa).

A helical transmembrane segment spans residues 25–45 (VVLAGFAVLFYIVVKFVVPMF).

The protein belongs to the ATPase B chain family. In terms of assembly, F-type ATPases have 2 components, F(1) - the catalytic core - and F(0) - the membrane proton channel. F(1) has five subunits: alpha(3), beta(3), gamma(1), delta(1), epsilon(1). F(0) has three main subunits: a(1), b(2) and c(10-14). The alpha and beta chains form an alternating ring which encloses part of the gamma chain. F(1) is attached to F(0) by a central stalk formed by the gamma and epsilon chains, while a peripheral stalk is formed by the delta and b chains.

It is found in the cell membrane. Functionally, f(1)F(0) ATP synthase produces ATP from ADP in the presence of a proton or sodium gradient. F-type ATPases consist of two structural domains, F(1) containing the extramembraneous catalytic core and F(0) containing the membrane proton channel, linked together by a central stalk and a peripheral stalk. During catalysis, ATP synthesis in the catalytic domain of F(1) is coupled via a rotary mechanism of the central stalk subunits to proton translocation. In terms of biological role, component of the F(0) channel, it forms part of the peripheral stalk, linking F(1) to F(0). The chain is ATP synthase subunit b from Arthrobacter sp. (strain FB24).